The primary structure comprises 447 residues: N-succinylarginine dihydrolase (447 aa).

Substrate-binding positions include 19-28, Asn110, and 137-138; these read AGLSFGNEAS and HR. The active site involves Glu174. Arg212 lines the substrate pocket. Residue His248 is part of the active site. Asp250 and Asn359 together coordinate substrate. The active-site Nucleophile is Cys365.

This sequence belongs to the succinylarginine dihydrolase family. In terms of assembly, homodimer.

The enzyme catalyses N(2)-succinyl-L-arginine + 2 H2O + 2 H(+) = N(2)-succinyl-L-ornithine + 2 NH4(+) + CO2. It functions in the pathway amino-acid degradation; L-arginine degradation via AST pathway; L-glutamate and succinate from L-arginine: step 2/5. Its function is as follows. Catalyzes the hydrolysis of N(2)-succinylarginine into N(2)-succinylornithine, ammonia and CO(2). In Escherichia coli (strain ATCC 8739 / DSM 1576 / NBRC 3972 / NCIMB 8545 / WDCM 00012 / Crooks), this protein is N-succinylarginine dihydrolase.